Reading from the N-terminus, the 176-residue chain is Large ribosomal subunit protein bL17m (176 aa).

The transit peptide at 1 to 8 directs the protein to the mitochondrion; sequence MRLSLAAA.

Belongs to the bacterial ribosomal protein bL17 family. In terms of assembly, component of the mitochondrial ribosome large subunit (39S) which comprises a 16S rRNA and about 50 distinct proteins.

The protein localises to the mitochondrion. The sequence is that of Large ribosomal subunit protein bL17m (Mrpl17) from Rattus norvegicus (Rat).